Consider the following 329-residue polypeptide: Phosphate acetyltransferase (329 aa).

This sequence belongs to the phosphate acetyltransferase and butyryltransferase family.

It is found in the cytoplasm. It catalyses the reaction acetyl-CoA + phosphate = acetyl phosphate + CoA. Its pathway is metabolic intermediate biosynthesis; acetyl-CoA biosynthesis; acetyl-CoA from acetate: step 2/2. The polypeptide is Phosphate acetyltransferase (pta) (Staphylococcus epidermidis (strain ATCC 35984 / DSM 28319 / BCRC 17069 / CCUG 31568 / BM 3577 / RP62A)).